Here is a 307-residue protein sequence, read N- to C-terminus: Upstream stimulatory factor 1 (307 aa).

Disordered regions lie at residues 104-131 (DDNG…SVGG) and 168-207 (QGGS…VERR). The segment covering 122–131 (PTDSSTSVGG) has biased composition (low complexity). The segment covering 187-207 (DGPRTTRDDKRRAQHNEVERR) has biased composition (basic and acidic residues). Residues 196–251 (KRRAQHNEVERRRRDKINNWIVQLSKIIPDCSMESTKTGQSKGGILSKACDYIQEL) enclose the bHLH domain. Residues 268 to 289 (LQMDNEVLRQQVEDLKNNNLTL) form a leucine-zipper region.

As to quaternary structure, efficient DNA binding requires dimerization with another bHLH protein. Binds DNA as a homodimer or a heterodimer. In terms of tissue distribution, oocyte and somatic tissue. Oocytic and somatic forms of this protein exist, probably as a result of post-translational modifications or minor splicing differences.

It localises to the nucleus. Functionally, may act as a regulator of transcription factor IIIA (TFIIIA) gene expression. The protein is Upstream stimulatory factor 1 (usf1) of Xenopus borealis (Kenyan clawed frog).